A 237-amino-acid polypeptide reads, in one-letter code: Orotidine 5'-phosphate decarboxylase (237 aa).

Substrate contacts are provided by residues Asp17, Lys39, 66 to 75 (DLKLHDIGNT), Thr121, Arg182, Gln191, Gly211, and Arg212. Lys68 (proton donor) is an active-site residue.

This sequence belongs to the OMP decarboxylase family. Type 1 subfamily. As to quaternary structure, homodimer.

The catalysed reaction is orotidine 5'-phosphate + H(+) = UMP + CO2. Its pathway is pyrimidine metabolism; UMP biosynthesis via de novo pathway; UMP from orotate: step 2/2. Catalyzes the decarboxylation of orotidine 5'-monophosphate (OMP) to uridine 5'-monophosphate (UMP). This chain is Orotidine 5'-phosphate decarboxylase, found in Rhodopseudomonas palustris (strain TIE-1).